The following is a 106-amino-acid chain: Large ribosomal subunit protein eL42 (106 aa).

Belongs to the eukaryotic ribosomal protein eL42 family.

The polypeptide is Large ribosomal subunit protein eL42 (RPL44) (Yarrowia lipolytica (strain CLIB 122 / E 150) (Yeast)).